Consider the following 207-residue polypeptide: uncharacterized protein (207 aa).

Residues 1 to 19 (MRHGLLALICWLCCVVAHS) form the signal peptide.

To P.aeruginosa PA4490 and T.maritima TM0986.

This is an uncharacterized protein from Escherichia coli (strain K12).